A 524-amino-acid polypeptide reads, in one-letter code: MKGLENLGLENIGQVFHNLSYDELLKHEKNNNEGVCTKNGTFSVDTGIFTGRSPKDKYFVKQDPSQKYIAWGKINQAISEELFEKLLVKAKKQLSNSDIYIQDAYCGASLKSRKAVRFVTQIAWQAHFVKNMFIRPKEEELSGFKPDFVVYNACKCVNEDYEKDGLNSEVFVIFNIEKNIAVIGGTWYGGEMKKGIFSMMNYWLPLENKLPMHCSANVGEKGDVALFFGLSGTGKTTLSTDPKRRLIGDDEHGWDDEGVFNFEGGCYAKCINLDPQSEPEIYGAIKQNALLENVVLKDDLSVDFNNGSKTENTRVSYPIEHILNHEPSLSAGHPSNIIFLSADAFGVLPPVSKLSKEQAMYYFLSGYTAKVAGTERGITEPVATFSACFGEVFLPLHPTVYAKLLGEKISKHNVNVYLVNTGWSGGAYGVGKRMSIKATRACINAILDGSIQNCEFENYDLFNLAVPKELAGVESKLLNPINTWEDKKAYEETKLKLAKMFIENFKRYEDVKEGAEFKLAGPAI.

Substrate contacts are provided by Arg52, Tyr188, and Lys194. ATP is bound by residues Lys194, His213, and 229–237 (GLSGTGKTT). 2 residues coordinate Mn(2+): Lys194 and His213. Asp250 contacts Mn(2+). Residues Glu278, Arg314, and Thr439 each coordinate ATP. Arg314 serves as a coordination point for substrate.

It belongs to the phosphoenolpyruvate carboxykinase (ATP) family. Mn(2+) serves as cofactor.

It localises to the cytoplasm. It catalyses the reaction oxaloacetate + ATP = phosphoenolpyruvate + ADP + CO2. It participates in carbohydrate biosynthesis; gluconeogenesis. Involved in the gluconeogenesis. Catalyzes the conversion of oxaloacetate (OAA) to phosphoenolpyruvate (PEP) through direct phosphoryl transfer between the nucleoside triphosphate and OAA. In Campylobacter lari (strain RM2100 / D67 / ATCC BAA-1060), this protein is Phosphoenolpyruvate carboxykinase (ATP).